A 335-amino-acid polypeptide reads, in one-letter code: 34 kDa spicule matrix protein (335 aa).

The signal sequence occupies residues 1 to 17; the sequence is MKGLLLILASLVAIATG. The C-type lectin domain maps to 29-194; it reads SGASCYRYFN…ATAMRAFVCE (166 aa). Cys-50 and Cys-193 are oxidised to a cystine. A disordered region spans residues 199–335; sequence QNIPPGQQPG…QEAETDVTGS (137 aa). Over residues 207 to 310 the composition is skewed to gly residues; that stretch reads PGFGGQQPGF…GGPQRPGMGG (104 aa). Low complexity predominate over residues 311–323; that stretch reads QPNSPNPRFNRPR.

The protein belongs to the SM50 family. In terms of tissue distribution, embryo spicule.

Its subcellular location is the secreted. Its function is as follows. Major matrix protein of the sea urchin embryo spicule which directs crystal growth in certain orientations and inhibit growth in others. The sequence is that of 34 kDa spicule matrix protein from Lytechinus pictus (Painted sea urchin).